We begin with the raw amino-acid sequence, 960 residues long: MKKNYNPKDIEEHLYNFWEKNGFFKPNNNLNKPAFCIMMPPPNITGNLHMGHAFQQTIMDILIRYNRMQGKNTLWQVGTDHAGIATQILIERQIFSEERKTKKDYSRNDFIKKIWKWKKKSNFSVKKQMKRLGNSVDWDREKFTLDPDISNSVKEAFIILYKNNLIYQKKRLVHWDSKLETVISDLEVEHRLIKSKKWFIRYPIIKNIKNINIEYLLVATTRPETLLGDTALAINPKDDKYNHLIGQSVICPIVNRIIPIIADHYADMNKDTGCVKITPGHDFNDYEVGQRHKLPMINIFTFNGKIKSNFSIYDYQGSKSNFYDSSIPTEFQNLDILSARKKIIYEIEKLGLLEKIEECNFFTPYSERSGVIIQPMLTNQWYLKTSHLSQSAIDVVREKKIKFIPNQYKSMYLSWMNNIEDWCISRQLWWGHQIPVWYDDKKNIYVGHSEKKIREEYNISDDMILNQDNDVLDTWFSSGLWTFSTLGWPEKTEFLKIFHSTDVLVSGFDIIFFWIARMIMLTMYLVKDSYGNPQIPFKDVYITGLIRDEEGKKMSKSKGNVIDPIDMIDGISLNELIEKRTSNLLQPHLSQKIRYHTIKQFPNGISATGTDALRFTFSALASNTRDIQWDMNRLKGYRNFCNKLWNASRFVLKNTKDHDYFNFSVNDNMLLINKWILIKFNNTVKSYRNSLDSYRFDIAANILYDFIWNVFCDWYLEFVKSVIKSGSYQDIYFTKNVLIHVLELLLRLSHPIMPFITEAIWQRVKIIKHIKDRTIMLQSFPEYNDQLFDKSTLSNINWIKKIIIFIRNTRSKMNISSTKLLSLFLKNINSEKKKVIQENKFILKNIASLEKISILSKQDDEPCLSLKEIIDGVDILVPVLKAIDKEIELKRLNKEIEKIKSKMLISEKKMSNQDFLSYAPKNIIDKEIKKLKSLNEIYLTLSQQLESLHDAFCKKNKIFN.

The short motif at 42-52 (PNITGNLHMGH) is the 'HIGH' region element. Positions 553–557 (KMSKS) match the 'KMSKS' region motif. ATP is bound at residue K556. Residues 879–950 (VLKAIDKEIE…LSQQLESLHD (72 aa)) adopt a coiled-coil conformation.

It belongs to the class-I aminoacyl-tRNA synthetase family. ValS type 1 subfamily. Monomer.

The protein resides in the cytoplasm. The catalysed reaction is tRNA(Val) + L-valine + ATP = L-valyl-tRNA(Val) + AMP + diphosphate. Catalyzes the attachment of valine to tRNA(Val). As ValRS can inadvertently accommodate and process structurally similar amino acids such as threonine, to avoid such errors, it has a 'posttransfer' editing activity that hydrolyzes mischarged Thr-tRNA(Val) in a tRNA-dependent manner. This chain is Valine--tRNA ligase, found in Buchnera aphidicola subsp. Schizaphis graminum (strain Sg).